The following is a 375-amino-acid chain: Geranylgeranyl transferase type-1 subunit beta (375 aa).

Residues 1-33 are disordered; it reads MSETAVSIDSDRSKSEEEDEEEYSPPVQSSPSA. S2 is modified (N-acetylserine). 4 PFTB repeats span residues 157–199, 206–247, 265–306, and 313–354; these read SKSL…YMLD, KESA…RLMG, PSLL…KLIG, and KMAL…SLLE. Geranylgeranyl diphosphate contacts are provided by residues 232 to 234 and 285 to 288; these read HGG and RTNK. Zn(2+) is bound by residues D291 and C293. 294 to 297 serves as a coordination point for geranylgeranyl diphosphate; it reads YAFW. H342 lines the Zn(2+) pocket.

This sequence belongs to the protein prenyltransferase subunit beta family. Heterodimer of an alpha and a beta subunit. Requires Zn(2+) as cofactor. It depends on Mg(2+) as a cofactor. As to expression, expressed in roots, leaves, stems, flowers and siliques.

It carries out the reaction geranylgeranyl diphosphate + L-cysteinyl-[protein] = S-geranylgeranyl-L-cysteinyl-[protein] + diphosphate. In terms of biological role, catalyzes the transfer of a geranyl-geranyl moiety from geranyl-geranyl pyrophosphate to a cysteine at the fourth position from the C-terminus of proteins having the C-terminal sequence Cys-aliphatic-aliphatic-X (CaaX). Seems to exclusively prenylate CaaX substrates with leucine in the terminal position. The beta subunit is responsible for peptide-binding. May negatively regulate abscisic acid (ABA) signaling in guard cells and auxin-induced lateral root initiation. Negatively regulates ABA signaling in guard cells. in negative regulation of auxin-induced lateral root initiation. The sequence is that of Geranylgeranyl transferase type-1 subunit beta (GGB) from Arabidopsis thaliana (Mouse-ear cress).